Consider the following 327-residue polypeptide: Acetaldehyde dehydrogenase 5 (327 aa).

15–18 contributes to the NAD(+) binding site; that stretch reads SGNI. Catalysis depends on Cys-133, which acts as the Acyl-thioester intermediate. NAD(+) contacts are provided by residues 164–172 and Asn-297; that span reads SAGPGTRAN.

It belongs to the acetaldehyde dehydrogenase family.

The catalysed reaction is acetaldehyde + NAD(+) + CoA = acetyl-CoA + NADH + H(+). The protein is Acetaldehyde dehydrogenase 5 of Rhodococcus jostii (strain RHA1).